A 299-amino-acid polypeptide reads, in one-letter code: Acidic endochitinase Pun g 14, amyloplastic (299 aa).

Residues 1–26 (MAKTLPFSRALLLSLSILLVARAISA) constitute an amyloplast transit peptide. In terms of domain architecture, GH18 spans 27–299 (GDIAIYWGQN…TYSTTIKDQV (273 aa)). 2 disulfide bridges follow: cysteine 46–cysteine 93 and cysteine 76–cysteine 83. Glutamate 153 (proton donor) is an active-site residue. Residues cysteine 185 and cysteine 216 are joined by a disulfide bond.

It belongs to the glycosyl hydrolase 18 family. Chitinase class III subfamily. Monomer. As to expression, highly expressed in seeds and to a lesser extent in the skin of the pomegranate fruit (at protein level). Not expressed in leaves or flesh of the fruit (at protein level).

Its subcellular location is the plastid. It localises to the amyloplast. The enzyme catalyses Random endo-hydrolysis of N-acetyl-beta-D-glucosaminide (1-&gt;4)-beta-linkages in chitin and chitodextrins.. Its activity is regulated as follows. Activity is not affected by addition of 10 mM Ca(2+) or removal of Ca(2+). In terms of biological role, hydrolyzes chitin. Probable calcium storage protein of the seeds. Binds calcium ions with high capacity and low affinity. Involved in seed germination. The sequence is that of Acidic endochitinase Pun g 14, amyloplastic from Punica granatum (Pomegranate).